A 213-amino-acid chain; its full sequence is Cytochrome b6 (213 aa).

The helical transmembrane segment at 30 to 50 (IFYCLGGLTLLAFLVQCVTGL) threads the bilayer. C33 is a heme c binding site. H84 and H98 together coordinate heme b. 3 helical membrane-spanning segments follow: residues 88-108 (ANLMILLVFLHMLRVYYTGSF), 114-134 (LNWLAGCFLLVLSLGLAFTGY), and 184-204 (LHVMILPLVTIGFLVAHFIMI). Residues H185 and H200 each coordinate heme b.

Belongs to the cytochrome b family. PetB subfamily. As to quaternary structure, the subunits of the cytochrome bc complex are a Rieske Fe-S protein (PetC), cytochrome b6 (PetB), subunit IV (PetD), and a diheme cytochrome c (PetX). Requires heme b as cofactor. Heme c is required as a cofactor.

The protein localises to the cell membrane. In terms of biological role, component of the cytochrome bc complex which donates electrons to the photosynthetic reaction center. The protein is Cytochrome b6 of Heliobacterium mobile (Heliobacillus mobilis).